A 179-amino-acid polypeptide reads, in one-letter code: NADH dehydrogenase [ubiquinone] 1 beta subcomplex subunit 9 (179 aa).

Ala2 bears the N-acetylalanine mark. Ser85 bears the Phosphoserine mark. The disordered stretch occupies residues Glu136–Asp162.

This sequence belongs to the complex I LYR family. In terms of assembly, mammalian complex I is composed of 45 different subunits.

The protein localises to the mitochondrion inner membrane. Functionally, accessory subunit of the mitochondrial membrane respiratory chain NADH dehydrogenase (Complex I), that is believed to be not involved in catalysis. Complex I functions in the transfer of electrons from NADH to the respiratory chain. The immediate electron acceptor for the enzyme is believed to be ubiquinone. The polypeptide is NADH dehydrogenase [ubiquinone] 1 beta subcomplex subunit 9 (NDUFB9) (Pongo abelii (Sumatran orangutan)).